The sequence spans 74 residues: Conotoxin Vc6.8 (74 aa).

Positions 1 to 19 (MEKLTILLLVAAVLMSTQA) are cleaved as a signal peptide. A propeptide spanning residues 20 to 34 (LMQEQRQKAKINLFS) is cleaved from the precursor. 3 disulfides stabilise this stretch: C49-C62, C55-C66, and C61-C70.

Belongs to the conotoxin O2 superfamily. Expressed by the venom duct.

Its subcellular location is the secreted. Its function is as follows. Inhibits voltage-gated ion channels. This is Conotoxin Vc6.8 from Conus victoriae (Queen Victoria cone).